The primary structure comprises 199 residues: Imidazoleglycerol-phosphate dehydratase (199 aa).

It belongs to the imidazoleglycerol-phosphate dehydratase family.

It localises to the cytoplasm. The enzyme catalyses D-erythro-1-(imidazol-4-yl)glycerol 3-phosphate = 3-(imidazol-4-yl)-2-oxopropyl phosphate + H2O. It participates in amino-acid biosynthesis; L-histidine biosynthesis; L-histidine from 5-phospho-alpha-D-ribose 1-diphosphate: step 6/9. This chain is Imidazoleglycerol-phosphate dehydratase, found in Kineococcus radiotolerans (strain ATCC BAA-149 / DSM 14245 / SRS30216).